A 229-amino-acid polypeptide reads, in one-letter code: Large ribosomal subunit protein uL1 (229 aa).

The protein belongs to the universal ribosomal protein uL1 family. As to quaternary structure, part of the 50S ribosomal subunit.

Binds directly to 23S rRNA. The L1 stalk is quite mobile in the ribosome, and is involved in E site tRNA release. In terms of biological role, protein L1 is also a translational repressor protein, it controls the translation of the L11 operon by binding to its mRNA. The sequence is that of Large ribosomal subunit protein uL1 from Gemmatimonas aurantiaca (strain DSM 14586 / JCM 11422 / NBRC 100505 / T-27).